The primary structure comprises 494 residues: Ribitol 5-phosphate transferase FKRP (494 aa).

The Cytoplasmic segment spans residues 1-6 (MRLTRC). The chain crosses the membrane as a helical span at residues 7–29 (WAALAAAIILNLLVFFYVSWLQH). The Lumenal portion of the chain corresponds to 30–494 (QPRNSRARGP…NPALLSLTGG (465 aa)). Residues Cys-168 and Cys-191 are joined by a disulfide bond. N-linked (GlcNAc...) asparagine glycosylation is found at Asn-172 and Asn-209. 4 residues coordinate Zn(2+): Cys-289, Cys-296, Cys-317, and Cys-318. The interval 289 to 318 (CSKESARCFGTVAGDTPAYLYEGRWTPPCC) is zinc finger loop. 2 residues coordinate CDP-L-ribitol: Gly-345 and Arg-352. CDP-L-ribitol regions lie at residues 359 to 364 (WDYDVD), 437 to 438 (QD), and 480 to 482 (NPE). Mg(2+) contacts are provided by Asp-360, Asp-362, and Asp-364.

Belongs to the LicD transferase family. In terms of assembly, homodimer; disulfide-linked. Forms a complex composed of FKRP, FKTN/fukutin, and RXYLT1/TMEM5. Also exists as large multimeric protein complexes. May interact with the dystrophin-glycoprotein complex (DGC). N-glycosylated. As to expression, expressed in the retina, specifically in the inner segments of the photoreceptors, the outer plexiform layers, inner nuclear layers, and ganglion cell layers (at protein level). Expressed at highest levels in brain, lung, heart, kidney and liver.

It localises to the golgi apparatus membrane. The protein localises to the secreted. It is found in the cell membrane. The protein resides in the sarcolemma. Its subcellular location is the rough endoplasmic reticulum. It localises to the cytoplasm. It catalyses the reaction 3-O-[Rib-ol-P-3-beta-D-GalNAc-(1-&gt;3)-beta-D-GlcNAc-(1-&gt;4)-(O-6-P-alpha-D-Man)]-Thr-[protein] + CDP-L-ribitol = 3-O-[Rib-ol-P-Rib-ol-P-3-beta-D-GalNAc-(1-&gt;3)-beta-D-GlcNAc-(1-&gt;4)-(O-6-P-alpha-D-Man)]-Thr-[protein] + CMP + H(+). Its pathway is protein modification; protein glycosylation. Catalyzes the transfer of CDP-ribitol to ribitol 5-phosphate previously attached by FKTN/fukutin of to the phosphorylated O-mannosyl trisaccharide (N-acetylgalactosamine-beta-3-N-acetylglucosamine-beta-4-(phosphate-6-)mannose), a carbohydrate structure present in alpha-dystroglycan (DAG1). This constitutes the second step in the formation of the ribose 5-phosphate tandem repeat which links the phosphorylated O-mannosyl trisaccharide to the ligand binding moiety composed of repeats of 3-xylosyl-alpha-1,3-glucuronic acid-beta-1. This Mus musculus (Mouse) protein is Ribitol 5-phosphate transferase FKRP.